Reading from the N-terminus, the 563-residue chain is Arginine--tRNA ligase (563 aa).

The 'HIGH' region signature appears at 121–131 (PNIAKPFSIGH).

It belongs to the class-I aminoacyl-tRNA synthetase family. In terms of assembly, monomer.

Its subcellular location is the cytoplasm. It catalyses the reaction tRNA(Arg) + L-arginine + ATP = L-arginyl-tRNA(Arg) + AMP + diphosphate. This is Arginine--tRNA ligase from Streptococcus thermophilus (strain CNRZ 1066).